The following is a 344-amino-acid chain: Cathepsin B-like cysteine proteinase 5 (344 aa).

The signal sequence occupies residues 1–15 (MWKLSAILLVAAASA). Positions 16-81 (VVIPGHREAP…DIVATEVSDA (66 aa)) are excised as a propeptide. Cystine bridges form between C95-C124, C107-C154, C143-C213, C144-C150, C183-C217, and C191-C203. Residue C110 is part of the active site. Residues H286 and N306 contribute to the active site.

This sequence belongs to the peptidase C1 family.

In Caenorhabditis elegans, this protein is Cathepsin B-like cysteine proteinase 5 (cpr-5).